Consider the following 485-residue polypeptide: Adenosylhomocysteinase 2 (485 aa).

Residues threonine 64, aspartate 139, and glutamate 205 each contribute to the substrate site. Residue 206-208 (TTT) participates in NAD(+) binding. Positions 235 and 239 each coordinate substrate. Residues asparagine 240, 269–274 (GYGDVG), glutamate 292, asparagine 327, 348–350 (IGH), and asparagine 397 each bind NAD(+).

The protein belongs to the adenosylhomocysteinase family. It depends on NAD(+) as a cofactor.

The enzyme catalyses S-adenosyl-L-homocysteine + H2O = L-homocysteine + adenosine. It functions in the pathway amino-acid biosynthesis; L-homocysteine biosynthesis; L-homocysteine from S-adenosyl-L-homocysteine: step 1/1. Functionally, adenosylhomocysteine is a competitive inhibitor of S-adenosyl-L-methionine-dependent methyl transferase reactions; therefore adenosylhomocysteinase may play a key role in the control of methylations via regulation of the intracellular concentration of adenosylhomocysteine. The protein is Adenosylhomocysteinase 2 (SAHH2) of Arabidopsis thaliana (Mouse-ear cress).